An 807-amino-acid chain; its full sequence is Phenylalanine--tRNA ligase beta subunit (807 aa).

The tRNA-binding domain occupies 39-153; the sequence is SARSQGVVVG…EIPAVGTPVA (115 aa). The region spanning 407–491 is the B5 domain; it reads RTPVPLQLRR…RLVGFDKFGS (85 aa). The Mg(2+) site is built by aspartate 469, aspartate 475, glutamate 478, and glutamate 479. Positions 713-806 constitute an FDX-ACB domain; it reads PTVPASERDL…LSKQFKAELR (94 aa).

Belongs to the phenylalanyl-tRNA synthetase beta subunit family. Type 1 subfamily. As to quaternary structure, tetramer of two alpha and two beta subunits. Requires Mg(2+) as cofactor.

It localises to the cytoplasm. The catalysed reaction is tRNA(Phe) + L-phenylalanine + ATP = L-phenylalanyl-tRNA(Phe) + AMP + diphosphate + H(+). This is Phenylalanine--tRNA ligase beta subunit from Synechococcus sp. (strain CC9902).